The following is a 420-amino-acid chain: Small ribosomal subunit protein mS75 (420 aa).

The transit peptide at 1–11 directs the protein to the mitochondrion; the sequence is MYNLSRIIYRF. Disordered regions lie at residues 99–120 and 390–420; these read RQKN…DVMS and RYSP…GKQT. The segment covering 102–114 has biased composition (polar residues); sequence NAANPSSDNTPSD. The segment covering 396–409 has biased composition (basic residues); sequence QKRRSKRKQKRKER.

Component of the mitochondrial ribosome small subunit. In terms of tissue distribution, expressed at high levels in reproductive organs and, at lower levels, ubiquitously.

The protein resides in the mitochondrion. Its function is as follows. Essential for fertility (male and female gametophyte functions and development). Required for the integrity of female gametic mitochondria. Modulates male gametophyte functions, including pollen tube growth and style penetration. Involved in mitochondrial-driven cell-to-cell communication in embryo sacs during female gametes maturation (including embryogenesis initiation and endosperm development), especially for reciprocal signaling between central and egg cells which regulates reciprocal development. The protein is Small ribosomal subunit protein mS75 of Arabidopsis thaliana (Mouse-ear cress).